The following is a 141-amino-acid chain: Hemoglobin subunit alpha-D (141 aa).

The Globin domain maps to 1–141 (VLTGEDKKHV…VAAVLAEKYR (141 aa)). Heme b is bound by residues histidine 58 and histidine 87.

Belongs to the globin family. In terms of assembly, heterotetramer of two alpha-D chains and two beta chains. As to expression, red blood cells.

Its function is as follows. Involved in oxygen transport from the lung to the various peripheral tissues. The sequence is that of Hemoglobin subunit alpha-D (HBAD) from Turdus merula (Common blackbird).